The sequence spans 467 residues: Acetaldehyde dehydrogenase (acetylating) EutE (467 aa).

The interval 1–19 is targets protein to the BMC; sequence MNQQDIEQVVKAVLLKMKD.

The protein belongs to the EutE/PduP family. Interacts with EutS, which targets it to the interior of the BMC.

The protein resides in the bacterial microcompartment. It carries out the reaction acetaldehyde + NAD(+) + CoA = acetyl-CoA + NADH + H(+). It functions in the pathway amine and polyamine degradation; ethanolamine degradation. Functionally, acts as the second step in ethanolamine degradation by converting acetaldehyde into acetyl-CoA. Has a very strong preference for NAD(+) over NADP(+) in both catalytic directions. May play a role in bacterial microcompartment (BMC) assembly or maintenance. Directly targeted to the BMC. Its function is as follows. Expression of the eut operon allows this bacteria to use ethanolamine (EA) as a carbon, nitrogen and energy source. It relies on cobalamin (vitamin B12) both as a cofactor for the ethanolamine ammonia-lyase (EAL) activity and to induce the operon. EA enhances bacterial survival in macrophages in a concentration-dependent manner, suggesting it is an important nutrient during infection. The chain is Acetaldehyde dehydrogenase (acetylating) EutE from Salmonella typhimurium (strain LT2 / SGSC1412 / ATCC 700720).